Reading from the N-terminus, the 281-residue chain is Insulin-like growth factor-binding protein 2 (281 aa).

A signal peptide spans 1–21 (MVLSEHLLVLLGAVLCAPALS). Positions 23-106 (VLFRCPPCSP…VLGLGTCGKR (84 aa)) constitute an IGFBP N-terminal domain. 6 cysteine pairs are disulfide-bonded: Cys-27–Cys-56, Cys-30–Cys-58, Cys-38–Cys-59, Cys-47–Cys-62, Cys-70–Cys-83, and Cys-77–Cys-103. Disordered regions lie at residues 107–127 (RDAE…DQSD) and 139–180 (PAVP…RPAR). A compositionally biased stretch (basic and acidic residues) spans 156-176 (VNRERANEQHRSKTNKSEDKK). In terms of domain architecture, Thyroglobulin type-1 spans 180 to 262 (RSLCQLQLDQ…SPTVRGDPEC (83 aa)). Disulfide bonds link Cys-183-Cys-217, Cys-228-Cys-239, and Cys-241-Cys-262. Residues 257-259 (RGD) carry the Cell attachment site motif.

As to quaternary structure, interacts with igf1 and igf2.

It is found in the secreted. Its function is as follows. IGF-binding proteins prolong the half-life of the IGFs and have been shown to either inhibit or stimulate the growth promoting effects of the IGFs on cell culture. They alter the interaction of IGFs with their cell surface receptors. This chain is Insulin-like growth factor-binding protein 2 (igfbp2), found in Xenopus laevis (African clawed frog).